Consider the following 299-residue polypeptide: Taste receptor type 2 member 4 (299 aa).

At 1–9 (MLRLFYFSA) the chain is on the extracellular side. The chain crosses the membrane as a helical span at residues 10–30 (IIASVILNFVGIIMNLFITVV). Residues 31-46 (NCKTWVKSHRISSSDR) lie on the Cytoplasmic side of the membrane. Residues 47 to 67 (ILFSLGITRFLMLGLFLVNTI) traverse the membrane as a helical segment. Topologically, residues 68–81 (YFVSSNTERSVYLS) are extracellular. The helical transmembrane segment at 82 to 102 (AFFVLCFMFLDSSSLWFVTLL) threads the bilayer. Residues 103–131 (NILYCVKITNFQHSVFLLLKRNISPKIPR) are Cytoplasmic-facing. Residues 132–152 (LLLACVLISAFTTCLYITLSQ) form a helical membrane-spanning segment. At 153–172 (ASPFPELVTTRNNTSFNINE) the chain is on the extracellular side. N-linked (GlcNAc...) asparagine glycans are attached at residues N164 and N165. The helical transmembrane segment at 173–193 (GILSLVVSLVLSSSLQFIINV) threads the bilayer. The Cytoplasmic segment spans residues 194–230 (TSASLLIHSLRRHIQKMQKNATGFWNPQTEAHVGAMK). A helical membrane pass occupies residues 231 to 251 (LMVYFLILYIPYSVATLVQYL). Residues 252 to 262 (PFYAGMDMGTK) are Extracellular-facing. The chain crosses the membrane as a helical span at residues 263 to 283 (SICLIFATLYSPGHSVLIIIT). The Cytoplasmic portion of the chain corresponds to 284–299 (HPKLKTTAKKILCFKK).

This sequence belongs to the G-protein coupled receptor T2R family.

It localises to the membrane. Its subcellular location is the cell projection. The protein resides in the cilium membrane. Functionally, gustducin-coupled receptor implicated in the perception of bitter compounds in the oral cavity and the gastrointestinal tract. Signals through PLCB2 and the calcium-regulated cation channel TRPM5. In airway epithelial cells, binding of denatonium increases the intracellular calcium ion concentration and stimulates ciliary beat frequency. In Pan paniscus (Pygmy chimpanzee), this protein is Taste receptor type 2 member 4 (TAS2R4).